An 828-amino-acid chain; its full sequence is Phenylalanine--tRNA ligase beta subunit (828 aa).

In terms of domain architecture, tRNA-binding spans glycine 44–alanine 155. Residues tryptophan 411–serine 486 form the B5 domain. 4 residues coordinate Mg(2+): aspartate 464, aspartate 470, glutamate 473, and glutamate 474. Residues serine 734–arginine 827 form the FDX-ACB domain.

Belongs to the phenylalanyl-tRNA synthetase beta subunit family. Type 1 subfamily. In terms of assembly, tetramer of two alpha and two beta subunits. Requires Mg(2+) as cofactor.

The protein resides in the cytoplasm. It catalyses the reaction tRNA(Phe) + L-phenylalanine + ATP = L-phenylalanyl-tRNA(Phe) + AMP + diphosphate + H(+). This is Phenylalanine--tRNA ligase beta subunit from Mycolicibacterium paratuberculosis (strain ATCC BAA-968 / K-10) (Mycobacterium paratuberculosis).